Consider the following 1481-residue polypeptide: Cystic fibrosis transmembrane conductance regulator (1481 aa).

The Cytoplasmic portion of the chain corresponds to 1 to 77; that stretch reads MQRSPLEKAS…KLINALRRCF (77 aa). Residues 78–98 form a helical membrane-spanning segment; that stretch reads FWRFMFYGILLYLGEVTKAVQ. Residues 81-365 form the ABC transmembrane type-1 1 domain; the sequence is FMFYGILLYL…WAVQTWYDSL (285 aa). Topologically, residues 99-122 are extracellular; sequence PLLLGRIIASYDPDNKEERSIAIY. The chain crosses the membrane as a helical span at residues 123–146; that stretch reads LGIGLCLLFIVRTLLLHPAIFGLH. The Cytoplasmic portion of the chain corresponds to 147 to 195; sequence HIGMQMRIAMFSLIYKKTLKLSSRVLDKISIGQLVSLLSNNLNKFDEGL. Residues 196 to 216 traverse the membrane as a helical segment; sequence ALAHFVWIVPLQVALLMGLIW. Topologically, residues 217–222 are extracellular; that stretch reads ELLQAS. A helical transmembrane segment spans residues 223-243; sequence AFCGLGFLIVLALFQAGLGRM. The Cytoplasmic portion of the chain corresponds to 244 to 298; the sequence is MMKYRDQRAGKINERLVITSEMIENIQSVKAYCWEEAMEKMIENLRQTELKLTRK. Residues 299 to 319 traverse the membrane as a helical segment; the sequence is AAYVRYFNSSAFFFSGFFVVF. The Extracellular segment spans residues 320 to 339; sequence LSVLPYALIKGIVLRKIFTT. The helical transmembrane segment at 340–358 threads the bilayer; it reads ISFCIVLRMAVTRQFPWAV. Residues 359 to 858 lie on the Cytoplasmic side of the membrane; it reads QTWYDSLGAI…YLRYITVHKS (500 aa). ATP contacts are provided by residues W401, S434, 458–465, and Q493; that span reads GSTGAGKT. In terms of domain architecture, ABC transporter 1 spans 423–646; that stretch reads NDDDSLFFSN…RPDFSSKLMG (224 aa). Residue C524 is the site of S-palmitoyl cysteine attachment. A phosphoserine mark is found at S549 and S660. Residues 654–831 are disordered R region; that stretch reads SAERRNSILT…EEINEEDLKE (178 aa). At S670 the chain carries Phosphoserine; by PKA. Position 686 is a phosphoserine (S686). K688 participates in a covalent cross-link: Glycyl lysine isopeptide (Lys-Gly) (interchain with G-Cter in ubiquitin). Phosphoserine occurs at positions 700 and 712. Position 717 is a phosphothreonine (T717). 6 positions are modified to phosphoserine: S737, S753, S768, S790, S795, and S813. Residues 859 to 879 form a helical membrane-spanning segment; sequence LIFVLIWCLVIFLAEVAASLV. In terms of domain architecture, ABC transmembrane type-1 2 spans 859–1155; it reads LIFVLIWCLV…AVNSSIDVDS (297 aa). Over 880–918 the chain is Extracellular; the sequence is VLWFLGNTPPQDKGNSTYSRNNSYAVIITRTSSYYVFYI. Residues N894 and N900 are each glycosylated (N-linked (GlcNAc...) asparagine). Residues 919–939 form a discontinuously helical membrane-spanning segment; sequence YVGVADTLLAMGFFRGLPLVH. The Cytoplasmic segment spans residues 940–990; the sequence is TLITVSKILHHKMLHSVLQAPMSTLNTLKAGGILNRFSKDIAILDDLLPLT. The chain crosses the membrane as a helical span at residues 991-1011; the sequence is IFDFIQLLLIVIGAIAVVAVL. Over 1012–1013 the chain is Extracellular; sequence QP. A helical transmembrane segment spans residues 1014–1034; the sequence is YIFVATVPVIVAFIMLRAYFL. Residues 1035 to 1095 are Cytoplasmic-facing; that stretch reads QTSQQLKQLE…TANWFLYLST (61 aa). A helical transmembrane segment spans residues 1096-1116; the sequence is LRWFQMRIEMIFVIFFIAVTF. The Extracellular segment spans residues 1117-1130; that stretch reads ISILTTGEGEGTVG. The helical transmembrane segment at 1131–1151 threads the bilayer; that stretch reads IILTLAMNIMSTLQWAVNSSI. Residues 1152–1481 are Cytoplasmic-facing; that stretch reads DVDSLMRSVS…TEEEVQDTRL (330 aa). The ABC transporter 2 domain occupies 1211 to 1444; sequence MTVKDLTAKY…RSLFQQAISP (234 aa). ATP is bound by residues Y1220 and 1245–1252; that span reads GRTGSGKS. The interaction with GORASP2 stretch occupies residues 1387-1481; sequence RTLKQAFADC…TEEEVQDTRL (95 aa). The S-palmitoyl cysteine moiety is linked to residue C1396. Phosphoserine is present on residues S1445 and S1457. The PDZ-binding signature appears at 1479-1481; sequence TRL.

This sequence belongs to the ABC transporter superfamily. ABCC family. CFTR transporter (TC 3.A.1.202) subfamily. As to quaternary structure, monomer; does not require oligomerization for channel activity. May form oligomers in the membrane. Interacts with SLC26A3, SLC26A6 and NHERF1. Interacts with SHANK2. Interacts with MYO6. Interacts (via C-terminus) with GOPC (via PDZ domain); this promotes CFTR internalization and thereby decreases channel activity. Interacts with SLC4A7 through NHERF1. Found in a complex with MYO5B and RAB11A. Interacts with ANO1. Interacts with SLC26A8. Interacts with AHCYL1; the interaction increases CFTR activity. Interacts with CSE1L. The core-glycosylated form interacts with GORASP2 (via PDZ GRASP-type 1 domain) in respone to ER stress. Interacts with MARCHF2; the interaction leads to CFTR ubiqtuitination and degradation. Interacts with ADGRG2. N-glycosylated. In terms of processing, phosphorylated; cAMP treatment promotes phosphorylation and activates the channel. Dephosphorylation decreases the ATPase activity (in vitro). Phosphorylation at PKA sites activates the channel. Phosphorylation at PKC sites enhances the response to phosphorylation by PKA. Phosphorylated by AMPK; this inhibits channel activity. Post-translationally, ubiquitinated, leading to its degradation in the lysosome. Deubiquitination by USP10 in early endosomes enhances its endocytic recycling to the cell membrane. Ubiquitinated by RNF185 during ER stress. Ubiquitinated by MARCHF2.

It localises to the apical cell membrane. The protein localises to the early endosome membrane. Its subcellular location is the cell membrane. The protein resides in the recycling endosome membrane. It is found in the endoplasmic reticulum membrane. It localises to the nucleus. The enzyme catalyses ATP + H2O + closed Cl(-) channel = ADP + phosphate + open Cl(-) channel.. It catalyses the reaction chloride(in) = chloride(out). It carries out the reaction hydrogencarbonate(in) = hydrogencarbonate(out). The catalysed reaction is ATP + H2O = ADP + phosphate + H(+). Functionally, epithelial ion channel that plays an important role in the regulation of epithelial ion and water transport and fluid homeostasis. Mediates the transport of chloride ions across the cell membrane. Possesses an intrinsic ATPase activity and utilizes ATP to gate its channel; the passive flow of anions through the channel is gated by cycles of ATP binding and hydrolysis by the ATP-binding domains. The ion channel is also permeable to HCO(3)(-); selectivity depends on the extracellular chloride concentration. Exerts its function also by modulating the activity of other ion channels and transporters. Contributes to the regulation of the pH and the ion content of the epithelial fluid layer. Modulates the activity of the epithelial sodium channel (ENaC) complex, in part by regulating the cell surface expression of the ENaC complex. May regulate bicarbonate secretion and salvage in epithelial cells by regulating the transporter SLC4A7. Can inhibit the chloride channel activity of ANO1. Plays a role in the chloride and bicarbonate homeostasis during sperm epididymal maturation and capacitation. This Macaca nemestrina (Pig-tailed macaque) protein is Cystic fibrosis transmembrane conductance regulator.